The following is a 342-amino-acid chain: S-adenosylmethionine:tRNA ribosyltransferase-isomerase (342 aa).

This sequence belongs to the QueA family. In terms of assembly, monomer.

The protein localises to the cytoplasm. The enzyme catalyses 7-aminomethyl-7-carbaguanosine(34) in tRNA + S-adenosyl-L-methionine = epoxyqueuosine(34) in tRNA + adenine + L-methionine + 2 H(+). Its pathway is tRNA modification; tRNA-queuosine biosynthesis. Transfers and isomerizes the ribose moiety from AdoMet to the 7-aminomethyl group of 7-deazaguanine (preQ1-tRNA) to give epoxyqueuosine (oQ-tRNA). The chain is S-adenosylmethionine:tRNA ribosyltransferase-isomerase from Listeria monocytogenes serovar 1/2a (strain ATCC BAA-679 / EGD-e).